We begin with the raw amino-acid sequence, 142 residues long: MAKKVVGYIKLQVKAGQANPSPPVGPALGQRGLNIMEFCKAFNAATQKLEPGLPVPVIITAYSDRTFTFITKSTPATTLLKKAAGISSGSKRPNTEKVGKVTRKQLEEIAKAKEPDLTAADLDAAVRTIAGSARSMGLVVEG.

It belongs to the universal ribosomal protein uL11 family. As to quaternary structure, part of the ribosomal stalk of the 50S ribosomal subunit. Interacts with L10 and the large rRNA to form the base of the stalk. L10 forms an elongated spine to which L12 dimers bind in a sequential fashion forming a multimeric L10(L12)X complex. Post-translationally, one or more lysine residues are methylated.

Its function is as follows. Forms part of the ribosomal stalk which helps the ribosome interact with GTP-bound translation factors. The polypeptide is Large ribosomal subunit protein uL11 (Stenotrophomonas maltophilia (strain R551-3)).